The primary structure comprises 624 residues: Chaperone protein HtpG (624 aa).

Residues 1 to 336 form an a; substrate-binding region; the sequence is MKGQETRGFQ…SNDLPLNVSR (336 aa). Positions 337-552 are b; it reads EILQDSSITR…NDEMSTQMAK (216 aa). The interval 553–624 is c; the sequence is LFAAAGQAVP…IRRMNQLLVS (72 aa).

The protein belongs to the heat shock protein 90 family. In terms of assembly, homodimer.

The protein localises to the cytoplasm. Molecular chaperone. Has ATPase activity. This chain is Chaperone protein HtpG, found in Cronobacter sakazakii (strain ATCC BAA-894) (Enterobacter sakazakii).